The primary structure comprises 86 residues: Cell division topological specificity factor (86 aa).

This sequence belongs to the MinE family.

Its function is as follows. Prevents the cell division inhibition by proteins MinC and MinD at internal division sites while permitting inhibition at polar sites. This ensures cell division at the proper site by restricting the formation of a division septum at the midpoint of the long axis of the cell. The chain is Cell division topological specificity factor from Rhizobium etli (strain ATCC 51251 / DSM 11541 / JCM 21823 / NBRC 15573 / CFN 42).